Reading from the N-terminus, the 427-residue chain is Large ribosomal subunit protein uL4 (427 aa).

At Ala-2 the chain carries N-acetylalanine. Position 14 is an N6-acetyllysine (Lys-14). Arg-97 carries the omega-N-methylarginine modification. Residue Lys-106 is modified to N6-acetyllysine. Residue Lys-239 forms a Glycyl lysine isopeptide (Lys-Gly) (interchain with G-Cter in SUMO2) linkage. Position 259 is an N6-acetyllysine (Lys-259). Residue Thr-266 is modified to Phosphothreonine. Phosphoserine is present on residues Ser-290 and Ser-295. Arg-300 carries the post-translational modification Citrulline. Residue Lys-327 forms a Glycyl lysine isopeptide (Lys-Gly) (interchain with G-Cter in SUMO2) linkage. Residues Lys-333 and Lys-353 each carry the N6-acetyllysine modification. Position 364 is an N6-acetyllysine; alternate (Lys-364). Residue Lys-364 forms a Glycyl lysine isopeptide (Lys-Gly) (interchain with G-Cter in SUMO1); alternate linkage. Residue Ser-365 is modified to Phosphoserine. Residues 369–427 (AAVAGKKPVVGKKGKKAAVGVKKQKKPLVGKKAAATKKPAPEKKPAEKKPTTEEKKPAA) form a disordered region. Basic residues predominate over residues 377–397 (VVGKKGKKAAVGVKKQKKPLV). Over residues 407 to 427 (PAPEKKPAEKKPTTEEKKPAA) the composition is skewed to basic and acidic residues.

This sequence belongs to the universal ribosomal protein uL4 family. Component of the large ribosomal subunit. May bind IPO9 with low affinity. Interacts with RBM3. In terms of processing, citrullinated by PADI4.

The protein resides in the cytoplasm. Functionally, component of the large ribosomal subunit. The ribosome is a large ribonucleoprotein complex responsible for the synthesis of proteins in the cell. This is Large ribosomal subunit protein uL4 (RPL4) from Homo sapiens (Human).